We begin with the raw amino-acid sequence, 299 residues long: Probable alpha-L-glutamate ligase (299 aa).

Positions 104-287 (LQLLAREGIE…VSGKIIEFLE (184 aa)) constitute an ATP-grasp domain. Residues lysine 141, 178–179 (EF), aspartate 187, and 211–213 (RSN) each bind ATP. Mg(2+) is bound by residues aspartate 248, glutamate 260, and asparagine 262. Mn(2+)-binding residues include aspartate 248, glutamate 260, and asparagine 262.

This sequence belongs to the RimK family. Requires Mg(2+) as cofactor. It depends on Mn(2+) as a cofactor.

The chain is Probable alpha-L-glutamate ligase from Trichodesmium erythraeum (strain IMS101).